A 207-amino-acid polypeptide reads, in one-letter code: dTTP/UTP pyrophosphatase (207 aa).

Residue D79 is the Proton acceptor of the active site.

The protein belongs to the Maf family. YhdE subfamily. Requires a divalent metal cation as cofactor.

The protein resides in the cytoplasm. It carries out the reaction dTTP + H2O = dTMP + diphosphate + H(+). The enzyme catalyses UTP + H2O = UMP + diphosphate + H(+). Functionally, nucleoside triphosphate pyrophosphatase that hydrolyzes dTTP and UTP. May have a dual role in cell division arrest and in preventing the incorporation of modified nucleotides into cellular nucleic acids. The sequence is that of dTTP/UTP pyrophosphatase from Nitrobacter hamburgensis (strain DSM 10229 / NCIMB 13809 / X14).